We begin with the raw amino-acid sequence, 45 residues long: Large ribosomal subunit protein bL34 (45 aa).

Residues 1-45 (MTKRTFGGTSRKRKRVSGFRVRMRSHTGRRVIRTRRKRGRSRLAA) form a disordered region. A compositionally biased stretch (basic residues) spans 10–45 (SRKRKRVSGFRVRMRSHTGRRVIRTRRKRGRSRLAA).

The protein belongs to the bacterial ribosomal protein bL34 family.

The chain is Large ribosomal subunit protein bL34 from Synechococcus sp. (strain CC9311).